The chain runs to 293 residues: 4-hydroxybenzoate octaprenyltransferase (293 aa).

7 consecutive transmembrane segments (helical) span residues 25–45 (IGNFLLLWPMLWGLWIAAKGL), 48–68 (LKVLVVFVLGVLIMRAAGCVI), 101–121 (LFVVLCLVAFGLVLLMNPLTI), 142–162 (HFPQVHLGAAFGWAIPMAFAA), 165–185 (GAVAPVAWLLFLSAVLWATIY), 223–243 (VMLAVLVAAGLVVGLGAFWYL), and 271–291 (FLNNNWLGGLIFLGLLLDLHL).

Belongs to the UbiA prenyltransferase family. Mg(2+) serves as cofactor.

It localises to the cell inner membrane. The catalysed reaction is all-trans-octaprenyl diphosphate + 4-hydroxybenzoate = 4-hydroxy-3-(all-trans-octaprenyl)benzoate + diphosphate. It functions in the pathway cofactor biosynthesis; ubiquinone biosynthesis. Its function is as follows. Catalyzes the prenylation of para-hydroxybenzoate (PHB) with an all-trans polyprenyl group. Mediates the second step in the final reaction sequence of ubiquinone-8 (UQ-8) biosynthesis, which is the condensation of the polyisoprenoid side chain with PHB, generating the first membrane-bound Q intermediate 3-octaprenyl-4-hydroxybenzoate. In Alkalilimnicola ehrlichii (strain ATCC BAA-1101 / DSM 17681 / MLHE-1), this protein is 4-hydroxybenzoate octaprenyltransferase.